A 453-amino-acid chain; its full sequence is MEASLLKKNQSIELTIEDLTHDGSGVGKIDGYPLFIPNTLPGEKVTAKIIKLNKNYGFARMENIETVSADRVEPPCAVYSKCGGCSLQHLSYDGQLEFKRNQVEETMKRIGKLNVEVPETLGMENPWRYRNKSQVPVGFVNGKLTAGFYQKRSHAIIDMSTCLIHNEQGDFAVQKTREILAKYGTEPYDEQTGKGDIRHIMTRFAHTTGQLMIVLVTTKERMPFKEEIVRELVEQLELTSIVQNINPHKTNVIFGDRTKTLWGKDIIEDTIHGIRFAISARSFYQVNPIQTEVLYQQAIDAAELTGEETVIDAYCGIGSISLCLAKKAKHVYGVEIVDQAIQDARANAELNELANTTFETGKAEEVIPAWYKAGIVADVLVVDPPRKGCDEKLLETILAMKPKKVVYVSCNPGTLARDMKILTDGGYVAKKVQPVDMFPMTTHIEAVTVLHLN.

One can recognise a TRAM domain in the interval 5-63 (LLKKNQSIELTIEDLTHDGSGVGKIDGYPLFIPNTLPGEKVTAKIIKLNKNYGFARMEN). Positions 76, 82, 85, and 162 each coordinate [4Fe-4S] cluster. Residues Q285, Y314, E335, and D383 each coordinate S-adenosyl-L-methionine. The active-site Nucleophile is the C410.

It belongs to the class I-like SAM-binding methyltransferase superfamily. RNA M5U methyltransferase family.

This is an uncharacterized protein from Listeria monocytogenes serotype 4b (strain F2365).